The sequence spans 561 residues: Glutamate--tRNA ligase (561 aa).

The 'HIGH' region signature appears at 107–117 (PNPSGPLHLGH).

Belongs to the class-I aminoacyl-tRNA synthetase family. Glutamate--tRNA ligase type 2 subfamily.

The protein resides in the cytoplasm. It catalyses the reaction tRNA(Glu) + L-glutamate + ATP = L-glutamyl-tRNA(Glu) + AMP + diphosphate. Its function is as follows. Catalyzes the attachment of glutamate to tRNA(Glu) in a two-step reaction: glutamate is first activated by ATP to form Glu-AMP and then transferred to the acceptor end of tRNA(Glu). The polypeptide is Glutamate--tRNA ligase (Methanospirillum hungatei JF-1 (strain ATCC 27890 / DSM 864 / NBRC 100397 / JF-1)).